Here is a 498-residue protein sequence, read N- to C-terminus: Glycerol kinase (498 aa).

Residue Thr12 coordinates ADP. Residues Thr12, Thr13, and Ser14 each contribute to the ATP site. Residue Thr12 coordinates sn-glycerol 3-phosphate. Position 16 (Arg16) interacts with ADP. Sn-glycerol 3-phosphate contacts are provided by Arg82, Glu83, Tyr134, and Asp243. The glycerol site is built by Arg82, Glu83, Tyr134, Asp243, and Gln244. ADP-binding residues include Thr265 and Gly308. 4 residues coordinate ATP: Thr265, Gly308, Gln312, and Gly412. Gly412 lines the ADP pocket.

Belongs to the FGGY kinase family.

The catalysed reaction is glycerol + ATP = sn-glycerol 3-phosphate + ADP + H(+). It participates in polyol metabolism; glycerol degradation via glycerol kinase pathway; sn-glycerol 3-phosphate from glycerol: step 1/1. Inhibited by fructose 1,6-bisphosphate (FBP). Key enzyme in the regulation of glycerol uptake and metabolism. Catalyzes the phosphorylation of glycerol to yield sn-glycerol 3-phosphate. The polypeptide is Glycerol kinase (Rhizobium rhizogenes (strain K84 / ATCC BAA-868) (Agrobacterium radiobacter)).